The following is a 194-amino-acid chain: Inner membrane-spanning protein YciB (194 aa).

Helical transmembrane passes span 1-21 (MKLL…KTTN), 49-69 (EKMH…TILF), 77-97 (WKPS…GWVS), 120-140 (LNYS…YVAY), and 150-170 (FKLF…GVYI).

Belongs to the YciB family.

Its subcellular location is the cell inner membrane. Functionally, plays a role in cell envelope biogenesis, maintenance of cell envelope integrity and membrane homeostasis. This Hahella chejuensis (strain KCTC 2396) protein is Inner membrane-spanning protein YciB.